The sequence spans 303 residues: Proteasome subunit beta (303 aa).

Positions 1–64 are cleaved as a propeptide — removed in mature form; by autocatalysis; the sequence is MTWPDRDTSA…VTPSDAVPHG (64 aa). The active-site Nucleophile is the T65.

It belongs to the peptidase T1B family. The 20S proteasome core is composed of 14 alpha and 14 beta subunits that assemble into four stacked heptameric rings, resulting in a barrel-shaped structure. The two inner rings, each composed of seven catalytic beta subunits, are sandwiched by two outer rings, each composed of seven alpha subunits. The catalytic chamber with the active sites is on the inside of the barrel. Has a gated structure, the ends of the cylinder being occluded by the N-termini of the alpha-subunits. Is capped by the proteasome-associated ATPase, ARC.

Its subcellular location is the cytoplasm. It carries out the reaction Cleavage of peptide bonds with very broad specificity.. The protein operates within protein degradation; proteasomal Pup-dependent pathway. The formation of the proteasomal ATPase ARC-20S proteasome complex, likely via the docking of the C-termini of ARC into the intersubunit pockets in the alpha-rings, may trigger opening of the gate for substrate entry. Interconversion between the open-gate and close-gate conformations leads to a dynamic regulation of the 20S proteasome proteolysis activity. In terms of biological role, component of the proteasome core, a large protease complex with broad specificity involved in protein degradation. This Mycolicibacterium gilvum (strain PYR-GCK) (Mycobacterium gilvum (strain PYR-GCK)) protein is Proteasome subunit beta.